We begin with the raw amino-acid sequence, 545 residues long: Chaperonin GroEL 2 (545 aa).

Residues Thr-30–Pro-33, Lys-51, Asp-87–Thr-91, Gly-415, Asn-479–Ala-481, and Asp-495 contribute to the ATP site.

The protein belongs to the chaperonin (HSP60) family. Forms a cylinder of 14 subunits composed of two heptameric rings stacked back-to-back. Interacts with the co-chaperonin GroES.

It localises to the cytoplasm. It catalyses the reaction ATP + H2O + a folded polypeptide = ADP + phosphate + an unfolded polypeptide.. Functionally, together with its co-chaperonin GroES, plays an essential role in assisting protein folding. The GroEL-GroES system forms a nano-cage that allows encapsulation of the non-native substrate proteins and provides a physical environment optimized to promote and accelerate protein folding. The chain is Chaperonin GroEL 2 from Escherichia coli O1:K1 / APEC.